Here is a 92-residue protein sequence, read N- to C-terminus: Dynein light chain 1, cytoplasmic (92 aa).

It belongs to the dynein light chain family. Homodimer. Cytoplasmic dynein consists of two catalytic heavy chains (HCs) and a number of non-catalytic subunits which present intermediate chains (ICs), light intermediate chains (LICs) and light chains (LCs). Component of the nuclear pore complex (NPC). NPC constitutes the exclusive means of nucleocytoplasmic transport. NPCs allow the passive diffusion of ions and small molecules and the active, nuclear transport receptor-mediated bidirectional transport of macromolecules such as proteins, RNAs, ribonucleoparticles (RNPs), and ribosomal subunits across the nuclear envelope. Due to its 8-fold rotational symmetry, all subunits are present with 8 copies or multiples thereof. Part of the NUP82 subcomplex. In the complex, interacts directly with Nup159.

It localises to the cytoplasm. The protein resides in the cytoskeleton. It is found in the nucleus. The protein localises to the nuclear pore complex. In terms of biological role, acts as one of several non-catalytic accessory components of the cytoplasmic dynein complex that are thought to be involved in linking dynein to cargos and to adapter proteins that regulate dynein function. Cytoplasmic dynein 1 acts as a motor for the intracellular retrograde motility of vesicles and organelles along microtubules. May play a role in changing or maintaining the spatial distribution of cytoskeletal structures. Also a component of the nuclear pore complex where it may contribute to the stable association of the Nup82 subcomplex with the NPC. This chain is Dynein light chain 1, cytoplasmic (DYN2), found in Saccharomyces cerevisiae (strain ATCC 204508 / S288c) (Baker's yeast).